Reading from the N-terminus, the 257-residue chain is Imidazole glycerol phosphate synthase subunit HisF (257 aa).

Active-site residues include D11 and D130.

This sequence belongs to the HisA/HisF family. As to quaternary structure, heterodimer of HisH and HisF.

It is found in the cytoplasm. The enzyme catalyses 5-[(5-phospho-1-deoxy-D-ribulos-1-ylimino)methylamino]-1-(5-phospho-beta-D-ribosyl)imidazole-4-carboxamide + L-glutamine = D-erythro-1-(imidazol-4-yl)glycerol 3-phosphate + 5-amino-1-(5-phospho-beta-D-ribosyl)imidazole-4-carboxamide + L-glutamate + H(+). The protein operates within amino-acid biosynthesis; L-histidine biosynthesis; L-histidine from 5-phospho-alpha-D-ribose 1-diphosphate: step 5/9. Functionally, IGPS catalyzes the conversion of PRFAR and glutamine to IGP, AICAR and glutamate. The HisF subunit catalyzes the cyclization activity that produces IGP and AICAR from PRFAR using the ammonia provided by the HisH subunit. This is Imidazole glycerol phosphate synthase subunit HisF from Vibrio cholerae serotype O1 (strain ATCC 39541 / Classical Ogawa 395 / O395).